Reading from the N-terminus, the 145-residue chain is Deoxyuridine 5'-triphosphate nucleotidohydrolase (145 aa).

Residues 65 to 67 (RSG), Asn78, 82 to 84 (TID), and Lys92 each bind substrate.

Belongs to the dUTPase family. It depends on Mg(2+) as a cofactor.

The catalysed reaction is dUTP + H2O = dUMP + diphosphate + H(+). Its pathway is pyrimidine metabolism; dUMP biosynthesis; dUMP from dCTP (dUTP route): step 2/2. This enzyme is involved in nucleotide metabolism: it produces dUMP, the immediate precursor of thymidine nucleotides and it decreases the intracellular concentration of dUTP so that uracil cannot be incorporated into DNA. The polypeptide is Deoxyuridine 5'-triphosphate nucleotidohydrolase (Syntrophomonas wolfei subsp. wolfei (strain DSM 2245B / Goettingen)).